The sequence spans 315 residues: MLSREDFYMIKQMRHEGAYIVDIATQIGCSERTVRRYLKYPEPPARKTRHKMVKLKPFMDYIDMRLAENVWNSEVIFAEIKAMGYTGGRSMLRYYIQPKRKMRPSKRTVRFETQPGYQLQHDWGEVEVEVAGQRCKVNFAVNTLGFSRSFHVFAAPKHDAEHTYESLVRAFRYFGGCVKTVLVDNQKAAVLKNNNGKVVFNSGFLLLADHYNFLPRACRPRRARTKGKVERMVKYLKENFFVRYRRFDSFTHVNQQLEQWIADVADKRELRQFKETPEQRSRWSRNICSVTGYRLRYQLLRYPPCVLGQLYRGWW.

In terms of domain architecture, HTH IS21-type spans 5-66 (EDFYMIKQMR…PFMDYIDMRL (62 aa)). The Integrase catalytic domain occupies 111 to 285 (FETQPGYQLQ…TPEQRSRWSR (175 aa)).

The protein belongs to the transposase IS21/IS408/IS1162 family.

Involved in the transposition of the insertion sequence. The polypeptide is Transposase for insertion sequence element IS640 (istA) (Shigella sonnei).